A 348-amino-acid polypeptide reads, in one-letter code: Fe-S cluster assembly protein DRE2 (348 aa).

Positions 1 to 185 are N-terminal SAM-like domain; that stretch reads MSGEKSSLLL…KKPESPRASV (185 aa). 2 disordered regions span residues 128–148 and 162–213; these read QTAP…SKSL and KKAE…TASK. The linker stretch occupies residues 186–241; the sequence is VAEDLDDGDELDGMNEDDSNSDELTASKSKFFDDVAGQDSADSIDEDDLVDDAEKS. The segment covering 188-206 has biased composition (acidic residues); sequence EDLDDGDELDGMNEDDSNS. [2Fe-2S] cluster contacts are provided by C248, C259, C262, and C264. The interval 248-264 is fe-S binding site A; it reads CGKTKTRRRKACKDCTC. Residues C311, C314, C322, and C325 each coordinate [4Fe-4S] cluster. 2 consecutive short sequence motifs (cx2C motif) follow at residues 311–314 and 322–325; these read CGSC and CSGC. The fe-S binding site B stretch occupies residues 311-325; the sequence is CGSCSLGDAFRCSGC.

Belongs to the anamorsin family. In terms of assembly, monomer. Interacts with TAH18. Interacts with MIA40. [2Fe-2S] cluster is required as a cofactor. Requires [4Fe-4S] cluster as cofactor.

Its subcellular location is the cytoplasm. The protein resides in the mitochondrion intermembrane space. Functionally, component of the cytosolic iron-sulfur (Fe-S) protein assembly (CIA) machinery required for the maturation of extramitochondrial Fe-S proteins. Part of an electron transfer chain functioning in an early step of cytosolic Fe-S biogenesis, facilitating the de novo assembly of a [4Fe-4S] cluster on the scaffold complex CFD1-NBP35. Electrons are transferred to DRE2 from NADPH via the FAD- and FMN-containing protein TAH18. TAH18-DRE2 are also required for the assembly of the diferric tyrosyl radical cofactor of ribonucleotide reductase (RNR), probably by providing electrons for reduction during radical cofactor maturation in the catalytic small subunit RNR2. The chain is Fe-S cluster assembly protein DRE2 from Lachancea thermotolerans (strain ATCC 56472 / CBS 6340 / NRRL Y-8284) (Yeast).